The following is a 376-amino-acid chain: UDP-N-acetylglucosamine--N-acetylmuramyl-(pentapeptide) pyrophosphoryl-undecaprenol N-acetylglucosamine transferase (376 aa).

UDP-N-acetyl-alpha-D-glucosamine-binding positions include 11–13 (TGG), N117, R160, S208, and Q310.

This sequence belongs to the glycosyltransferase 28 family. MurG subfamily.

It is found in the cell inner membrane. The catalysed reaction is di-trans,octa-cis-undecaprenyl diphospho-N-acetyl-alpha-D-muramoyl-L-alanyl-D-glutamyl-meso-2,6-diaminopimeloyl-D-alanyl-D-alanine + UDP-N-acetyl-alpha-D-glucosamine = di-trans,octa-cis-undecaprenyl diphospho-[N-acetyl-alpha-D-glucosaminyl-(1-&gt;4)]-N-acetyl-alpha-D-muramoyl-L-alanyl-D-glutamyl-meso-2,6-diaminopimeloyl-D-alanyl-D-alanine + UDP + H(+). It functions in the pathway cell wall biogenesis; peptidoglycan biosynthesis. In terms of biological role, cell wall formation. Catalyzes the transfer of a GlcNAc subunit on undecaprenyl-pyrophosphoryl-MurNAc-pentapeptide (lipid intermediate I) to form undecaprenyl-pyrophosphoryl-MurNAc-(pentapeptide)GlcNAc (lipid intermediate II). This is UDP-N-acetylglucosamine--N-acetylmuramyl-(pentapeptide) pyrophosphoryl-undecaprenol N-acetylglucosamine transferase from Rickettsia massiliae (strain Mtu5).